A 388-amino-acid chain; its full sequence is (S)-8-oxocitronellyl enol synthase ISY1 (388 aa).

NADP(+) is bound by residues 35 to 37 (TGI), 63 to 64 (RR), 81 to 82 (DV), 105 to 106 (TW), and Gln143. Active-site residues include Lys147 and Tyr178. Residues Tyr178, Ile205, and 212–214 (SMM) each bind NADP(+).

It belongs to the short-chain dehydrogenases/reductases (SDR) family.

The catalysed reaction is (S)-8-oxocitronellyl enol + NADP(+) = (6E)-8-oxogeranial + NADPH + H(+). It carries out the reaction (S)-8-oxocitronellyl enol + NAD(+) = (6E)-8-oxogeranial + NADH + H(+). Its function is as follows. Iridoid synthase that catalyzes the first step in generation of the iridoid ring scaffold using the linear monoterpene (6E)-8-oxogeranial as substrate. Iridoids comprise a large family of distinctive bicyclic monoterpenes that possess a wide range of pharmacological activities, including anticancer, anti-inflammatory, antifungal and antibacterial activities. Catalyzes the conversion of the linear monoterpene (6E)-8-oxogeranial to (S)-8-oxocitronellyl enol, a precursor of nepetalactones, which are metabolites that are both insect-repellent and have euphoric effect in cats. The sequence is that of (S)-8-oxocitronellyl enol synthase ISY1 from Nepeta racemosa (Catmint).